We begin with the raw amino-acid sequence, 247 residues long: UPF0273 protein PH0284 (247 aa).

Residues 3 to 247 (RRVKTGIPGV…VLKRGKVLEL (245 aa)) enclose the KaiC domain. 30 to 37 (GGPGTGKT) is a binding site for ATP.

Belongs to the UPF0273 family.

This Pyrococcus horikoshii (strain ATCC 700860 / DSM 12428 / JCM 9974 / NBRC 100139 / OT-3) protein is UPF0273 protein PH0284.